The primary structure comprises 99 residues: Large ribosomal subunit protein bL21 (99 aa).

This sequence belongs to the bacterial ribosomal protein bL21 family. Part of the 50S ribosomal subunit. Contacts protein L20.

In terms of biological role, this protein binds to 23S rRNA in the presence of protein L20. The protein is Large ribosomal subunit protein bL21 of Mesomycoplasma hyopneumoniae (strain 7448) (Mycoplasma hyopneumoniae).